The following is a 351-amino-acid chain: Cytochrome c biogenesis protein CcsA (351 aa).

Transmembrane regions (helical) follow at residues 17-37 (VLFLTMLLYWIGAAFPGLPAI), 38-58 (NALGTAGMAIANLSIATLLGA), 68-88 (LSNLYESLFFLSWGITTVHLI), 97-117 (LVGVFTTPVAMGIVAFATLTL), 143-163 (MMLSYSALMVGSLLAIAFLVI), 259-279 (IIGLGFPLLTIGIIAGAVWAN), 286-306 (WSWDPKETWALITWLVFAAYL), and 320-340 (AILAASGFVVVWICYLGVNLL).

It belongs to the CcmF/CycK/Ccl1/NrfE/CcsA family. May interact with ccs1.

It is found in the cellular thylakoid membrane. Its function is as follows. Required during biogenesis of c-type cytochromes (cytochrome c6 and cytochrome f) at the step of heme attachment. The sequence is that of Cytochrome c biogenesis protein CcsA from Trichormus variabilis (strain ATCC 29413 / PCC 7937) (Anabaena variabilis).